We begin with the raw amino-acid sequence, 441 residues long: Transcriptional regulatory protein ZraR (441 aa).

The 115-residue stretch at 7-121 (DILVVDDDIS…NLQATLEKAL (115 aa)) folds into the Response regulatory domain. Asp-56 carries the post-translational modification 4-aspartylphosphate. In terms of domain architecture, Sigma-54 factor interaction spans 141–370 (MVGKSPAMQH…LENAVERAVV (230 aa)). Residues Gly-172, Thr-173, Arg-329, and Arg-359 each contribute to the ATP site. Positions 421 to 440 (KTEAARQLGITRKTLLAKLS) form a DNA-binding region, H-T-H motif.

Post-translationally, phosphorylated by ZraS.

The protein localises to the cytoplasm. With respect to regulation, activity of the ZraS/ZraR two-component system is repressed by the zinc-bound form of ZraP, which probably interacts with the periplasmic region of ZraS. Functionally, part of the Zra signaling pathway, an envelope stress response (ESR) system composed of the periplasmic accessory protein ZraP, the histidine kinase ZraS and the transcriptional regulator ZraR. The ZraPSR system contributes to antibiotic resistance and is important for membrane integrity in the presence of membrane-targeting biocides. ZraR is a member of the two-component regulatory system ZraS/ZraR. When activated by ZraS, acts in conjunction with sigma-54 to regulate the expression of zraP in the presence of high Zn(2+) or Pb(2+) concentrations. Also positively autoregulates the expression of the zraSR operon. The sequence is that of Transcriptional regulatory protein ZraR (zraR) from Escherichia coli O157:H7.